A 112-amino-acid chain; its full sequence is CRISPR-associated endoribonuclease Cas2 2 (112 aa).

Asp15 serves as a coordination point for Mg(2+).

It belongs to the CRISPR-associated endoribonuclease Cas2 protein family. Homodimer, forms a heterotetramer with a Cas1 homodimer. Mg(2+) serves as cofactor.

Its function is as follows. CRISPR (clustered regularly interspaced short palindromic repeat), is an adaptive immune system that provides protection against mobile genetic elements (viruses, transposable elements and conjugative plasmids). CRISPR clusters contain sequences complementary to antecedent mobile elements and target invading nucleic acids. CRISPR clusters are transcribed and processed into CRISPR RNA (crRNA). Functions as a ssRNA-specific endoribonuclease. Involved in the integration of spacer DNA into the CRISPR cassette. This Rhodospirillum rubrum (strain ATCC 11170 / ATH 1.1.1 / DSM 467 / LMG 4362 / NCIMB 8255 / S1) protein is CRISPR-associated endoribonuclease Cas2 2.